The following is a 517-amino-acid chain: 3-hydroxyphenylacetate 6-hydroxylase (517 aa).

Cys449 contributes to the heme binding site.

Belongs to the cytochrome P450 family.

The enzyme catalyses 3-hydroxyphenylacetate + NADH + O2 + H(+) = homogentisate + NAD(+) + H2O. It carries out the reaction 3-hydroxyphenylacetate + NADPH + O2 + H(+) = homogentisate + NADP(+) + H2O. It catalyses the reaction 3,4-dihydroxyphenylacetate + NADH + O2 + H(+) = 2,4,5-trihydroxyphenylacetate + NAD(+) + H2O. The catalysed reaction is 3,4-dihydroxyphenylacetate + NADPH + O2 + H(+) = 2,4,5-trihydroxyphenylacetate + NADP(+) + H2O. It functions in the pathway aromatic compound metabolism; phenylacetate degradation. Functionally, catalyzes the hydroxylation of 3-hydroxyphenylacetate and 3,4-dihydroxyphenylacetate to 2,5-dihydroxyphenylacetate (homogentisate) and 2,4,5-trihydroxyphenylacetate, respectively. Both of these compounds are used as substrate by homogentisate dioxygenase in the homogentisate pathway. The homogentisate pathway is used to catabolize phenylacetate and use it as a carbon source. Can also catalyze the hydroxylation of phenylacetate to 2-hydroxyphenylacetate at low efficiency to compensate for loss of phacA. The polypeptide is 3-hydroxyphenylacetate 6-hydroxylase (phacB) (Emericella nidulans (Aspergillus nidulans)).